We begin with the raw amino-acid sequence, 97 residues long: Plastocyanin A/B (97 aa).

The Plastocyanin-like domain maps to 1–97 (AEVKLGSDDG…AGMKGEVTVN (97 aa)). Cu cation-binding residues include His-37, Cys-82, His-85, and Met-90.

It belongs to the plastocyanin family. Cu(2+) is required as a cofactor.

It is found in the plastid. The protein localises to the chloroplast thylakoid membrane. Participates in electron transfer between P700 and the cytochrome b6-f complex in photosystem I. This chain is Plastocyanin A/B (PETE), found in Petroselinum crispum (Parsley).